A 257-amino-acid polypeptide reads, in one-letter code: Glutamate racemase (257 aa).

Residues aspartate 12–serine 13 and tyrosine 44–glycine 45 contribute to the substrate site. Cysteine 75 functions as the Proton donor/acceptor in the catalytic mechanism. Asparagine 76–threonine 77 is a substrate binding site. Catalysis depends on cysteine 185, which acts as the Proton donor/acceptor. Position 186–187 (threonine 186–histidine 187) interacts with substrate.

The protein belongs to the aspartate/glutamate racemases family.

It catalyses the reaction L-glutamate = D-glutamate. Its pathway is cell wall biogenesis; peptidoglycan biosynthesis. Functionally, provides the (R)-glutamate required for cell wall biosynthesis. The polypeptide is Glutamate racemase (Clostridium botulinum (strain 657 / Type Ba4)).